Reading from the N-terminus, the 121-residue chain is Large ribosomal subunit protein bL19 (121 aa).

Belongs to the bacterial ribosomal protein bL19 family.

Its function is as follows. This protein is located at the 30S-50S ribosomal subunit interface and may play a role in the structure and function of the aminoacyl-tRNA binding site. This is Large ribosomal subunit protein bL19 from Polaromonas sp. (strain JS666 / ATCC BAA-500).